The chain runs to 241 residues: Glucosamine-6-phosphate deaminase (241 aa).

The active-site Proton acceptor; for enolization step is the Asp67. The active-site For ring-opening step is the Asn136. The active-site Proton acceptor; for ring-opening step is His138. Residue Glu143 is the For ring-opening step of the active site.

The protein belongs to the glucosamine/galactosamine-6-phosphate isomerase family. NagB subfamily.

The catalysed reaction is alpha-D-glucosamine 6-phosphate + H2O = beta-D-fructose 6-phosphate + NH4(+). Its pathway is amino-sugar metabolism; N-acetylneuraminate degradation; D-fructose 6-phosphate from N-acetylneuraminate: step 5/5. Functionally, catalyzes the reversible isomerization-deamination of glucosamine 6-phosphate (GlcN6P) to form fructose 6-phosphate (Fru6P) and ammonium ion. This Clostridium novyi (strain NT) protein is Glucosamine-6-phosphate deaminase.